Reading from the N-terminus, the 253-residue chain is Cholesterol ring-cleaving hydrolase IpdB subunit (253 aa).

Belongs to the 3-oxoacid CoA-transferase subunit B family. As to quaternary structure, heterotetramer composed of 2 IpdA subunits and 2 IpdB subunits.

It catalyses the reaction (3E)-2-(2-carboxylatoethyl)-3-methyl-6-oxocyclohex-1-ene-1-carboxyl-CoA + H2O = 6-methyl-3,7-dioxodecanedioyl-CoA. It functions in the pathway steroid metabolism; cholesterol degradation. In terms of biological role, involved in the final steps of cholesterol and steroid degradation. Opens the last steroid ring of cholesterol by catalyzing the hydrolysis of (3E)-2-(2-carboxylatoethyl)-3-methyl-6-oxocyclohex-1-ene-1-carboxyl-CoA (COCHEA-CoA) to 6-methyl-3,7-dioxodecanedioyl-CoA (MeDODA-CoA). This is Cholesterol ring-cleaving hydrolase IpdB subunit from Rhodococcus jostii (strain RHA1).